Consider the following 402-residue polypeptide: Flavohemoprotein (402 aa).

Positions 1-136 (MLSEKTIEIV…IADAFISIEA (136 aa)) constitute a Globin domain. Heme b is bound at residue histidine 85. Active-site charge relay system residues include tyrosine 95 and glutamate 135. The segment at 147–402 (GGWKDFRNFV…EFFGPAASLQ (256 aa)) is reductase. The FAD-binding FR-type domain occupies 150–260 (KDFRNFVVVK…SAPAGDFVLN (111 aa)). FAD contacts are provided by residues tyrosine 188 and 204-207 (RQYS). Residue 273-278 (GVGITP) participates in NADP(+) binding. 394–397 (FFGP) contacts FAD.

The protein belongs to the globin family. Two-domain flavohemoproteins subfamily. It in the C-terminal section; belongs to the flavoprotein pyridine nucleotide cytochrome reductase family. Requires heme b as cofactor. FAD is required as a cofactor.

The catalysed reaction is 2 nitric oxide + NADPH + 2 O2 = 2 nitrate + NADP(+) + H(+). It catalyses the reaction 2 nitric oxide + NADH + 2 O2 = 2 nitrate + NAD(+) + H(+). Functionally, is involved in NO detoxification in an aerobic process, termed nitric oxide dioxygenase (NOD) reaction that utilizes O(2) and NAD(P)H to convert NO to nitrate, which protects the bacterium from various noxious nitrogen compounds. Therefore, plays a central role in the inducible response to nitrosative stress. This chain is Flavohemoprotein, found in Bacillus thuringiensis subsp. konkukian (strain 97-27).